The sequence spans 306 residues: Myb family transcription factor MOF1 (306 aa).

The region spanning 19–79 (RSKVPRLRWT…HLQMYRCSRL (61 aa)) is the HTH myb-type domain. Positions 50-75 (PKLILQLMGVKGLTISHVKSHLQMYR) form a DNA-binding region, H-T-H motif.

As to quaternary structure, interacts with TPR1, TPR2 and TPR3. Expressed in roots, leaves, leaf sheaths, culms, panicles, lemmas, paleas, lodicules, stamens, and pistils.

The protein localises to the nucleus. Functionally, transcriptional repressor that plays a role in the regulation of organ identity and spikelet meristem determinacy. Interacts with the TPR corepressors to possibly repress the expression of downstream target genes. The protein is Myb family transcription factor MOF1 of Oryza sativa subsp. japonica (Rice).